We begin with the raw amino-acid sequence, 786 residues long: Digalactosyldiacylglycerol synthase 1, chloroplastic (786 aa).

A chloroplast-targeting transit peptide spans 1–25; sequence MASQRQPPSSSNAFSFLSKGWREVR.

Belongs to the glycosyltransferase group 1 family. Glycosyltransferase 4 subfamily. High expression in nodules infected cells, but low in nodule inner cortex and root central cylinder.

It localises to the plastid. The protein resides in the chloroplast outer membrane. It is found in the plastid outer membrane. It catalyses the reaction a 1,2-diacyl-3-O-(beta-D-galactosyl)-sn-glycerol + UDP-alpha-D-galactose = a 1,2-diacyl-3-O-[alpha-D-galactosyl-(1-&gt;6)-beta-D-galactosyl]-sn-glycerol + UDP + H(+). Its function is as follows. Involved in the synthesis of diacylglycerol galactolipids that are specifically found in thylakoid and in nodule peribacteroid membranes. Specific for alpha-glycosidic linkages. This Lotus japonicus (Lotus corniculatus var. japonicus) protein is Digalactosyldiacylglycerol synthase 1, chloroplastic.